The following is a 339-amino-acid chain: Transmembrane protein 120B (339 aa).

The stretch at 1 to 77 forms a coiled coil; the sequence is MSGQLERCER…ASREEAELVQ (77 aa). The next 6 helical transmembrane spans lie at 102 to 124, 132 to 152, 159 to 179, 187 to 207, 270 to 290, and 302 to 322; these read GLYL…AKFA, FKLY…FFLH, VFNF…SILI, GWWV…LTWP, FLLP…VTLF, and QVFV…LTTL.

This sequence belongs to the TMEM120 family. In terms of assembly, heterooligomer with TMEM120A.

The protein localises to the nucleus inner membrane. Its function is as follows. Necessary for efficient adipogenesis. Does not show ion channel activity. This Bos taurus (Bovine) protein is Transmembrane protein 120B (TMEM120B).